The sequence spans 362 residues: 3-dehydroquinate synthase (362 aa).

NAD(+) contacts are provided by residues 72–77, 106–110, 130–131, Lys143, Lys152, and 170–173; these read DGEQYK, GVVGD, TT, and CLKT. Residues Glu185, His248, and His265 each coordinate Zn(2+).

The protein belongs to the sugar phosphate cyclases superfamily. Dehydroquinate synthase family. The cofactor is Co(2+). Zn(2+) serves as cofactor. NAD(+) is required as a cofactor.

Its subcellular location is the cytoplasm. The enzyme catalyses 7-phospho-2-dehydro-3-deoxy-D-arabino-heptonate = 3-dehydroquinate + phosphate. Its pathway is metabolic intermediate biosynthesis; chorismate biosynthesis; chorismate from D-erythrose 4-phosphate and phosphoenolpyruvate: step 2/7. In terms of biological role, catalyzes the conversion of 3-deoxy-D-arabino-heptulosonate 7-phosphate (DAHP) to dehydroquinate (DHQ). The polypeptide is 3-dehydroquinate synthase (Aliivibrio salmonicida (strain LFI1238) (Vibrio salmonicida (strain LFI1238))).